We begin with the raw amino-acid sequence, 98 residues long: NADH-ubiquinone oxidoreductase chain 4L (98 aa).

A run of 3 helical transmembrane segments spans residues 1 to 21 (MSMV…GLLM), 29 to 49 (SLLC…MTIL), and 61 to 81 (IILL…LVMV).

It belongs to the complex I subunit 4L family. In terms of assembly, core subunit of respiratory chain NADH dehydrogenase (Complex I) which is composed of 45 different subunits.

Its subcellular location is the mitochondrion inner membrane. It carries out the reaction a ubiquinone + NADH + 5 H(+)(in) = a ubiquinol + NAD(+) + 4 H(+)(out). In terms of biological role, core subunit of the mitochondrial membrane respiratory chain NADH dehydrogenase (Complex I) which catalyzes electron transfer from NADH through the respiratory chain, using ubiquinone as an electron acceptor. Part of the enzyme membrane arm which is embedded in the lipid bilayer and involved in proton translocation. In Otaria byronia (South American sea lion), this protein is NADH-ubiquinone oxidoreductase chain 4L (MT-ND4L).